The sequence spans 734 residues: Photosystem I P700 chlorophyll a apoprotein A2 (734 aa).

The next 8 membrane-spanning stretches (helical) occupy residues 46 to 69, 135 to 158, 175 to 199, 273 to 291, 330 to 353, 369 to 395, 417 to 439, and 517 to 535; these read IFAS…FHVA, LYTG…LHLQ, LNHH…HVAI, IAHH…GHMY, IHFQ…QHMY, AALY…IFFI, AIIS…LYVH, and FLVH…LILV. The [4Fe-4S] cluster site is built by Cys-559 and Cys-568. The next 2 helical transmembrane spans lie at 575-596 and 643-665; these read AFYL…YWHW and LSVW…MFLI. Chlorophyll a-binding residues include His-654, Met-662, and Tyr-670. Trp-671 serves as a coordination point for phylloquinone. The chain crosses the membrane as a helical span at residues 707 to 727; that stretch reads LVGLAHFSVGYIFTYAAFLIA.

The protein belongs to the PsaA/PsaB family. The PsaA/B heterodimer binds the P700 chlorophyll special pair and subsequent electron acceptors. PSI consists of a core antenna complex that captures photons, and an electron transfer chain that converts photonic excitation into a charge separation. The eukaryotic PSI reaction center is composed of at least 11 subunits. It depends on P700 is a chlorophyll a/chlorophyll a' dimer, A0 is one or more chlorophyll a, A1 is one or both phylloquinones and FX is a shared 4Fe-4S iron-sulfur center. as a cofactor.

The protein resides in the plastid. The protein localises to the chloroplast thylakoid membrane. The enzyme catalyses reduced [plastocyanin] + hnu + oxidized [2Fe-2S]-[ferredoxin] = oxidized [plastocyanin] + reduced [2Fe-2S]-[ferredoxin]. Its function is as follows. PsaA and PsaB bind P700, the primary electron donor of photosystem I (PSI), as well as the electron acceptors A0, A1 and FX. PSI is a plastocyanin-ferredoxin oxidoreductase, converting photonic excitation into a charge separation, which transfers an electron from the donor P700 chlorophyll pair to the spectroscopically characterized acceptors A0, A1, FX, FA and FB in turn. Oxidized P700 is reduced on the lumenal side of the thylakoid membrane by plastocyanin. The protein is Photosystem I P700 chlorophyll a apoprotein A2 of Calycanthus floridus var. glaucus (Eastern sweetshrub).